The primary structure comprises 78 residues: Large ribosomal subunit protein uL24 (78 aa).

A disordered region spans residues 52 to 78; the sequence is PSEKTPNGGHVNKEMPIDISNVAKVEG.

Belongs to the universal ribosomal protein uL24 family. In terms of assembly, part of the 50S ribosomal subunit.

Its function is as follows. One of two assembly initiator proteins, it binds directly to the 5'-end of the 23S rRNA, where it nucleates assembly of the 50S subunit. Functionally, one of the proteins that surrounds the polypeptide exit tunnel on the outside of the subunit. In Campylobacter concisus (strain 13826), this protein is Large ribosomal subunit protein uL24.